We begin with the raw amino-acid sequence, 373 residues long: Mating-type protein A-2 (373 aa).

The tract at residues 1–22 is disordered; sequence MNLLNMQPKRSEQPAMFEENRA.

It to P.anserina SMR1.

In terms of biological role, required, together with mating-type protein A-3, for efficient ascospore formation. This chain is Mating-type protein A-2 (matA-2), found in Neurospora crassa (strain ATCC 24698 / 74-OR23-1A / CBS 708.71 / DSM 1257 / FGSC 987).